The chain runs to 214 residues: Protein-L-isoaspartate O-methyltransferase 1 (214 aa).

S62 is an active-site residue.

The protein belongs to the methyltransferase superfamily. L-isoaspartyl/D-aspartyl protein methyltransferase family.

The protein resides in the cytoplasm. The enzyme catalyses [protein]-L-isoaspartate + S-adenosyl-L-methionine = [protein]-L-isoaspartate alpha-methyl ester + S-adenosyl-L-homocysteine. Its function is as follows. Catalyzes the methyl esterification of L-isoaspartyl residues in peptides and proteins that result from spontaneous decomposition of normal L-aspartyl and L-asparaginyl residues. It plays a role in the repair and/or degradation of damaged proteins. The protein is Protein-L-isoaspartate O-methyltransferase 1 of Syntrophobacter fumaroxidans (strain DSM 10017 / MPOB).